Consider the following 234-residue polypeptide: MAKLTKRMRVIRDKVDVTKQYDINEAVALLKELATAKFVESVDVAVNLGIDARKSDQNVRGATVLPHGTGRSVRVAVFAQGANAEAAKEAGAELVGMEDLADQIKKGEMNFDVVIASPDAMRVVGQLGQILGPRGLMPNPKVGTVTPNVAEAVKNAKAGQVRYRNDKNGIIHTTIGKVDFDSEKLKENLESLVVALKRAKPATAKGVYIKKISLSTTMGAGVAIDQSGLSAVVN.

It belongs to the universal ribosomal protein uL1 family. In terms of assembly, part of the 50S ribosomal subunit.

In terms of biological role, binds directly to 23S rRNA. The L1 stalk is quite mobile in the ribosome, and is involved in E site tRNA release. Functionally, protein L1 is also a translational repressor protein, it controls the translation of the L11 operon by binding to its mRNA. The sequence is that of Large ribosomal subunit protein uL1 from Yersinia enterocolitica serotype O:8 / biotype 1B (strain NCTC 13174 / 8081).